Reading from the N-terminus, the 255-residue chain is 5'-nucleotidase SurE (255 aa).

4 residues coordinate a divalent metal cation: Asp8, Asp9, Ser40, and Asn93.

Belongs to the SurE nucleotidase family. A divalent metal cation serves as cofactor.

It localises to the cytoplasm. The enzyme catalyses a ribonucleoside 5'-phosphate + H2O = a ribonucleoside + phosphate. Nucleotidase that shows phosphatase activity on nucleoside 5'-monophosphates. The chain is 5'-nucleotidase SurE from Rhodopseudomonas palustris (strain BisA53).